Consider the following 212-residue polypeptide: Redox-sensing transcriptional repressor Rex (212 aa).

The segment at residues 17–56 is a DNA-binding region (H-T-H motif); it reads LYARSLRYLLEEGIHSVSSQELGERINVTAAQIRKDLSYF. 91–96 contributes to the NAD(+) binding site; the sequence is GIGLLG.

This sequence belongs to the transcriptional regulatory Rex family. Homodimer.

It localises to the cytoplasm. Functionally, modulates transcription in response to changes in cellular NADH/NAD(+) redox state. This chain is Redox-sensing transcriptional repressor Rex, found in Chloroflexus aggregans (strain MD-66 / DSM 9485).